A 513-amino-acid chain; its full sequence is ATP synthase subunit alpha (513 aa).

ATP is bound at residue 169-176 (GDRQTGKT).

The protein belongs to the ATPase alpha/beta chains family. As to quaternary structure, F-type ATPases have 2 components, CF(1) - the catalytic core - and CF(0) - the membrane proton channel. CF(1) has five subunits: alpha(3), beta(3), gamma(1), delta(1), epsilon(1). CF(0) has three main subunits: a(1), b(2) and c(9-12). The alpha and beta chains form an alternating ring which encloses part of the gamma chain. CF(1) is attached to CF(0) by a central stalk formed by the gamma and epsilon chains, while a peripheral stalk is formed by the delta and b chains.

It localises to the cell inner membrane. The catalysed reaction is ATP + H2O + 4 H(+)(in) = ADP + phosphate + 5 H(+)(out). In terms of biological role, produces ATP from ADP in the presence of a proton gradient across the membrane. The alpha chain is a regulatory subunit. This Edwardsiella ictaluri (strain 93-146) protein is ATP synthase subunit alpha.